The primary structure comprises 362 residues: Class I histocompatibility antigen, Gogo-OKO alpha chain (362 aa).

A signal peptide spans 1 to 24 (MAVVAPRTLLLLLSGTLALTRTWA). Residues 25–114 (GSHSMRYFYT…LRGYYNQSEG (90 aa)) form an alpha-1 region. Over 25 to 308 (GSHSMRYFYT…EPSSQPTIPI (284 aa)) the chain is Extracellular. N110 carries an N-linked (GlcNAc...) asparagine glycan. The tract at residues 115–206 (GSHTIQRMYG…ENGKETLQRT (92 aa)) is alpha-2. Cystine bridges form between C125–C188 and C227–C283. The alpha-3 stretch occupies residues 207–298 (DPPKTHMTHH…GLPKPLTLRW (92 aa)). Residues 209–295 (PKTHMTHHPV…QHEGLPKPLT (87 aa)) enclose the Ig-like C1-type domain. The tract at residues 299–308 (EPSSQPTIPI) is connecting peptide. The helical transmembrane segment at 309 to 332 (VGIIAGLVLLGAVITGAVVAAMMW) threads the bilayer. Topologically, residues 333 to 362 (RKKSSGRKGGSYSQAASSDSAQGSDVSLTA) are cytoplasmic. Residues 337 to 362 (SGRKGGSYSQAASSDSAQGSDVSLTA) form a disordered region. The span at 342 to 362 (GSYSQAASSDSAQGSDVSLTA) shows a compositional bias: low complexity.

This sequence belongs to the MHC class I family. Heterodimer of an alpha chain and a beta chain (beta-2-microglobulin).

It is found in the membrane. Its function is as follows. Involved in the presentation of foreign antigens to the immune system. This is Class I histocompatibility antigen, Gogo-OKO alpha chain from Gorilla gorilla gorilla (Western lowland gorilla).